We begin with the raw amino-acid sequence, 279 residues long: Shikimate dehydrogenase (NADP(+)) (279 aa).

Residues Ser-16–Ser-18 and Thr-63 contribute to the shikimate site. The Proton acceptor role is filled by Lys-67. Shikimate-binding residues include Asn-88 and Asp-103. NADP(+) contacts are provided by residues Gly-128–Ala-132 and Met-219. Tyr-221 contributes to the shikimate binding site. Position 243 (Gly-243) interacts with NADP(+).

This sequence belongs to the shikimate dehydrogenase family. Homodimer.

It carries out the reaction shikimate + NADP(+) = 3-dehydroshikimate + NADPH + H(+). It functions in the pathway metabolic intermediate biosynthesis; chorismate biosynthesis; chorismate from D-erythrose 4-phosphate and phosphoenolpyruvate: step 4/7. Its function is as follows. Involved in the biosynthesis of the chorismate, which leads to the biosynthesis of aromatic amino acids. Catalyzes the reversible NADPH linked reduction of 3-dehydroshikimate (DHSA) to yield shikimate (SA). The polypeptide is Shikimate dehydrogenase (NADP(+)) (Aromatoleum aromaticum (strain DSM 19018 / LMG 30748 / EbN1) (Azoarcus sp. (strain EbN1))).